The primary structure comprises 315 residues: Sulfate adenylyltransferase subunit 2 1 (315 aa).

Positions 287 to 315 (DSSSSERQGRAIDHDQSGSMERKKREGYF) are disordered. The segment covering 293–315 (RQGRAIDHDQSGSMERKKREGYF) has biased composition (basic and acidic residues).

This sequence belongs to the PAPS reductase family. CysD subfamily. Heterodimer composed of CysD, the smaller subunit, and CysN.

It carries out the reaction sulfate + ATP + H(+) = adenosine 5'-phosphosulfate + diphosphate. It participates in sulfur metabolism; hydrogen sulfide biosynthesis; sulfite from sulfate: step 1/3. With CysN forms the ATP sulfurylase (ATPS) that catalyzes the adenylation of sulfate producing adenosine 5'-phosphosulfate (APS) and diphosphate, the first enzymatic step in sulfur assimilation pathway. APS synthesis involves the formation of a high-energy phosphoric-sulfuric acid anhydride bond driven by GTP hydrolysis by CysN coupled to ATP hydrolysis by CysD. The sequence is that of Sulfate adenylyltransferase subunit 2 1 from Alkalilimnicola ehrlichii (strain ATCC BAA-1101 / DSM 17681 / MLHE-1).